A 254-amino-acid polypeptide reads, in one-letter code: Undecaprenyl-diphosphatase (254 aa).

Transmembrane regions (helical) follow at residues 1–21 (MGII…FLPV), 41–61 (AHKA…VFLY), 75–95 (LIIA…IIKG), 96–116 (LFSP…FIAV), 130–150 (ILKI…IAMI), 174–194 (AEFS…YDIM), 210–230 (TGFV…IGFV), and 234–254 (NFVP…LFVL).

The protein belongs to the UppP family.

The protein localises to the cell inner membrane. It catalyses the reaction di-trans,octa-cis-undecaprenyl diphosphate + H2O = di-trans,octa-cis-undecaprenyl phosphate + phosphate + H(+). Functionally, catalyzes the dephosphorylation of undecaprenyl diphosphate (UPP). Confers resistance to bacitracin. This chain is Undecaprenyl-diphosphatase, found in Persephonella marina (strain DSM 14350 / EX-H1).